The following is a 106-amino-acid chain: 3-oxoacyl-[acyl-carrier-protein] reductase (106 aa).

It belongs to the short-chain dehydrogenases/reductases (SDR) family. As to quaternary structure, homotetramer. As to expression, mesocarp.

The protein localises to the plastid. It localises to the chloroplast. The enzyme catalyses a (3R)-hydroxyacyl-[ACP] + NADP(+) = a 3-oxoacyl-[ACP] + NADPH + H(+). Its pathway is lipid metabolism; fatty acid biosynthesis. In Persea americana (Avocado), this protein is 3-oxoacyl-[acyl-carrier-protein] reductase.